The following is a 211-amino-acid chain: Ribosomal RNA small subunit methyltransferase G (211 aa).

S-adenosyl-L-methionine contacts are provided by residues G78, M83, 129-130 (AE), and R144.

The protein belongs to the methyltransferase superfamily. RNA methyltransferase RsmG family.

Its subcellular location is the cytoplasm. The catalysed reaction is guanosine(527) in 16S rRNA + S-adenosyl-L-methionine = N(7)-methylguanosine(527) in 16S rRNA + S-adenosyl-L-homocysteine. In terms of biological role, specifically methylates the N7 position of guanine in position 527 of 16S rRNA. In Pseudomonas syringae pv. tomato (strain ATCC BAA-871 / DC3000), this protein is Ribosomal RNA small subunit methyltransferase G.